Consider the following 391-residue polypeptide: Probable tRNA sulfurtransferase (391 aa).

Residues 60 to 167 (DETVAALQRV…NKAYVYSNTL (108 aa)) form the THUMP domain. Residues 184–185 (LL), 209–210 (YF), Arg266, Gly288, and Gln297 contribute to the ATP site.

Belongs to the ThiI family.

It localises to the cytoplasm. It carries out the reaction [ThiI sulfur-carrier protein]-S-sulfanyl-L-cysteine + a uridine in tRNA + 2 reduced [2Fe-2S]-[ferredoxin] + ATP + H(+) = [ThiI sulfur-carrier protein]-L-cysteine + a 4-thiouridine in tRNA + 2 oxidized [2Fe-2S]-[ferredoxin] + AMP + diphosphate. It catalyses the reaction [ThiS sulfur-carrier protein]-C-terminal Gly-Gly-AMP + S-sulfanyl-L-cysteinyl-[cysteine desulfurase] + AH2 = [ThiS sulfur-carrier protein]-C-terminal-Gly-aminoethanethioate + L-cysteinyl-[cysteine desulfurase] + A + AMP + 2 H(+). It functions in the pathway cofactor biosynthesis; thiamine diphosphate biosynthesis. Functionally, catalyzes the ATP-dependent transfer of a sulfur to tRNA to produce 4-thiouridine in position 8 of tRNAs, which functions as a near-UV photosensor. Also catalyzes the transfer of sulfur to the sulfur carrier protein ThiS, forming ThiS-thiocarboxylate. This is a step in the synthesis of thiazole, in the thiamine biosynthesis pathway. The sulfur is donated as persulfide by IscS. The polypeptide is Probable tRNA sulfurtransferase (Lachnoclostridium phytofermentans (strain ATCC 700394 / DSM 18823 / ISDg) (Clostridium phytofermentans)).